We begin with the raw amino-acid sequence, 78 residues long: Antitoxin VapB2 (78 aa).

The 41-residue stretch at 4 to 44 (AKIFMNGQSQAVRLPKEFRFSVKEVSVIPLGKGIVLQPLPN) folds into the SpoVT-AbrB domain.

This sequence belongs to the VapB family. As to quaternary structure, forms complexes with VapC2; probably VapC2(4):VapB2(2) in the absence of DNA, and VapC2(4):VapB2(4) in the presence of DNA. Crystallizes as heterodimers with stoichiometry VapC2(4):VapB2(4) in the presence of its probable promoter DNA. The heterodimers are in contact via alternative VapC-VapC and VapB-VapB interactions. This subunit contacts DNA.

Functionally, antitoxin component of a type II toxin-antitoxin (TA) system. Upon expression in E.coli or S.cerevisiae neutralizes the effect of cognate toxin VapC2, partially inhibits the RNase activity of VapC2. This is Antitoxin VapB2 (vapB2) from Rickettsia felis (strain ATCC VR-1525 / URRWXCal2) (Rickettsia azadi).